A 664-amino-acid chain; its full sequence is Intraflagellar transport protein 70A1 (664 aa).

TPR repeat units lie at residues 11–44 (DGEF…SSRS), 45–78 (RAGL…HPEL), 153–186 (PDGL…SGYQ), 188–220 (DLSY…GIRQ), 393–423 (TKQV…EKYI), 424–456 (PVLM…CNDH), and 458–491 (VWKL…NYDN). Residues 507 to 534 (YIMTSQNEEAEELMRKIEKEEEQLSYGD) are a coiled coil. The TPR 8 repeat unit spans residues 543–576 (CIVNLVIGTLYCAKGNYDFGISRVIKSLEPYHKK).

This sequence belongs to the TTC30/dfy-1/fleer family. Interacts wit the IFT B complex component IFT52.

The protein localises to the cell projection. The protein resides in the cilium. In terms of biological role, required for polyglutamylation of axonemal tubulin. Plays a role in anterograde intraflagellar transport (IFT), the process by which cilia precursors are transported from the base of the cilium to the site of their incorporation at the tip. The chain is Intraflagellar transport protein 70A1 (Ift70a1) from Mus musculus (Mouse).